A 337-amino-acid polypeptide reads, in one-letter code: Putative transcription activator protein HfaB (337 aa).

A compositionally biased stretch (polar residues) spans 303 to 313; sequence AYNNLGTNNAQ. A disordered region spans residues 303–337; that stretch reads AYNNLGTNNAQTRDDPSRWNARRDPDIRDAKRGRY. The segment covering 314-337 has biased composition (basic and acidic residues); it reads TRDDPSRWNARRDPDIRDAKRGRY.

In terms of biological role, required for the attachment of the holdfast to the cell. May be involved in the positive regulation of hfaC. The polypeptide is Putative transcription activator protein HfaB (hfaB) (Caulobacter vibrioides (strain ATCC 19089 / CIP 103742 / CB 15) (Caulobacter crescentus)).